The sequence spans 75 residues: Protein SlyX homolog (75 aa).

This sequence belongs to the SlyX family.

In Vibrio atlanticus (strain LGP32) (Vibrio splendidus (strain Mel32)), this protein is Protein SlyX homolog.